Consider the following 446-residue polypeptide: Serine--tRNA ligase, mitochondrial (446 aa).

251 to 253 serves as a coordination point for L-serine; sequence TAE. Residues 284–286 and valine 300 each bind ATP; that span reads RAE. Residue glutamate 307 participates in L-serine binding. 371 to 374 contributes to the ATP binding site; sequence EISS. L-serine is bound at residue threonine 407.

It belongs to the class-II aminoacyl-tRNA synthetase family. Type-1 seryl-tRNA synthetase subfamily. In terms of assembly, homodimer. The tRNA molecule binds across the dimer.

Its subcellular location is the mitochondrion matrix. It catalyses the reaction tRNA(Ser) + L-serine + ATP = L-seryl-tRNA(Ser) + AMP + diphosphate + H(+). Catalyzes the attachment of serine to tRNA(Ser). This is Serine--tRNA ligase, mitochondrial (DIA4) from Saccharomyces cerevisiae (strain ATCC 204508 / S288c) (Baker's yeast).